A 464-amino-acid chain; its full sequence is ATP synthase subunit beta (464 aa).

153 to 160 (GGAGVGKT) is an ATP binding site.

The protein belongs to the ATPase alpha/beta chains family. As to quaternary structure, F-type ATPases have 2 components, CF(1) - the catalytic core - and CF(0) - the membrane proton channel. CF(1) has five subunits: alpha(3), beta(3), gamma(1), delta(1), epsilon(1). CF(0) has three main subunits: a(1), b(2) and c(9-12). The alpha and beta chains form an alternating ring which encloses part of the gamma chain. CF(1) is attached to CF(0) by a central stalk formed by the gamma and epsilon chains, while a peripheral stalk is formed by the delta and b chains.

The protein resides in the cell inner membrane. The catalysed reaction is ATP + H2O + 4 H(+)(in) = ADP + phosphate + 5 H(+)(out). In terms of biological role, produces ATP from ADP in the presence of a proton gradient across the membrane. The catalytic sites are hosted primarily by the beta subunits. This is ATP synthase subunit beta from Burkholderia orbicola (strain MC0-3).